A 202-amino-acid polypeptide reads, in one-letter code: Small ribosomal subunit protein uS4 (202 aa).

Residues 22–43 (TRKSARRAYPPGQHGQNRKKRS) form a disordered region. The region spanning 90-152 (MRLDNTVFRL…APSRKLVENN (63 aa)) is the S4 RNA-binding domain.

This sequence belongs to the universal ribosomal protein uS4 family. In terms of assembly, part of the 30S ribosomal subunit. Contacts protein S5. The interaction surface between S4 and S5 is involved in control of translational fidelity.

In terms of biological role, one of the primary rRNA binding proteins, it binds directly to 16S rRNA where it nucleates assembly of the body of the 30S subunit. Its function is as follows. With S5 and S12 plays an important role in translational accuracy. This is Small ribosomal subunit protein uS4 from Trichormus variabilis (strain ATCC 29413 / PCC 7937) (Anabaena variabilis).